The following is a 256-amino-acid chain: Hydroxyacylglutathione hydrolase (256 aa).

Zn(2+)-binding residues include H56, H58, D60, H61, H114, D133, and H171.

This sequence belongs to the metallo-beta-lactamase superfamily. Glyoxalase II family. In terms of assembly, monomer. Zn(2+) is required as a cofactor.

It carries out the reaction an S-(2-hydroxyacyl)glutathione + H2O = a 2-hydroxy carboxylate + glutathione + H(+). The protein operates within secondary metabolite metabolism; methylglyoxal degradation; (R)-lactate from methylglyoxal: step 2/2. Thiolesterase that catalyzes the hydrolysis of S-D-lactoyl-glutathione to form glutathione and D-lactic acid. The chain is Hydroxyacylglutathione hydrolase from Rhodobacter capsulatus (Rhodopseudomonas capsulata).